A 160-amino-acid chain; its full sequence is Putative UPF0479 protein YBL113W-A (160 aa).

2 helical membrane passes run 39 to 59 (IVFC…KVLQ) and 136 to 156 (VPMI…ISQH).

It belongs to the UPF0479 family.

It is found in the membrane. The polypeptide is Putative UPF0479 protein YBL113W-A (Saccharomyces cerevisiae (strain ATCC 204508 / S288c) (Baker's yeast)).